The primary structure comprises 307 residues: MQHEENEIVSKSELLVVTGMSGAGKSLVLQNLEDLGYFCVDNLPPILLPKFVELMEQGNPSLRKVAIAIDLRGQEFFKSLVKEVDLLRSQNRVIVDVMFVEASEAKLISRYKETRRAHPLNDNGQRSLIDAIEEERNSLTEIRSIANYVIDTTVLKPKELRAQINHLFNRNDIETFSISVTSFGFKHGIQQDADLVFDVRFLPNPFYVEALRPLTGVDDEVYQYVMKWQETAIFYDKLLDLLKFMIPGYKKEGKTQLVIAIGCTGGQHRSVALAKRLAEDLNESYDYNVYVHHRDAHIESGVENEKS.

19–26 contacts ATP; that stretch reads GMSGAGKS. A GTP-binding site is contributed by 70 to 73; the sequence is DLRG.

This sequence belongs to the RapZ-like family.

Displays ATPase and GTPase activities. The sequence is that of Nucleotide-binding protein Sca_0414 from Staphylococcus carnosus (strain TM300).